The sequence spans 133 residues: UPF0047 protein Rv2556c (133 aa).

This sequence belongs to the UPF0047 family.

The polypeptide is UPF0047 protein Rv2556c (Mycobacterium tuberculosis (strain ATCC 25618 / H37Rv)).